The following is a 226-amino-acid chain: Cytidylate kinase (226 aa).

Gly10–Thr18 contacts ATP.

The protein belongs to the cytidylate kinase family. Type 1 subfamily.

It localises to the cytoplasm. The catalysed reaction is CMP + ATP = CDP + ADP. The enzyme catalyses dCMP + ATP = dCDP + ADP. The chain is Cytidylate kinase from Streptococcus pyogenes serotype M18 (strain MGAS8232).